A 361-amino-acid polypeptide reads, in one-letter code: Phospho-N-acetylmuramoyl-pentapeptide-transferase (361 aa).

10 helical membrane passes run 26 to 46, 73 to 93, 97 to 117, 134 to 154, 168 to 188, 200 to 220, 237 to 257, 264 to 284, 289 to 309, and 340 to 360; these read AILG…VMIR, TMGG…WADL, YVWV…VDDY, YFWQ…TASM, VSLT…IVGS, GLAI…AYLS, TGEL…FLWF, VFMG…VAVI, IVLF…ILQV, and IVRF…SLKI.

It belongs to the glycosyltransferase 4 family. MraY subfamily. Mg(2+) serves as cofactor.

It is found in the cell inner membrane. It catalyses the reaction UDP-N-acetyl-alpha-D-muramoyl-L-alanyl-gamma-D-glutamyl-meso-2,6-diaminopimeloyl-D-alanyl-D-alanine + di-trans,octa-cis-undecaprenyl phosphate = di-trans,octa-cis-undecaprenyl diphospho-N-acetyl-alpha-D-muramoyl-L-alanyl-D-glutamyl-meso-2,6-diaminopimeloyl-D-alanyl-D-alanine + UMP. The protein operates within cell wall biogenesis; peptidoglycan biosynthesis. Its function is as follows. Catalyzes the initial step of the lipid cycle reactions in the biosynthesis of the cell wall peptidoglycan: transfers peptidoglycan precursor phospho-MurNAc-pentapeptide from UDP-MurNAc-pentapeptide onto the lipid carrier undecaprenyl phosphate, yielding undecaprenyl-pyrophosphoryl-MurNAc-pentapeptide, known as lipid I. The sequence is that of Phospho-N-acetylmuramoyl-pentapeptide-transferase from Marinobacter nauticus (strain ATCC 700491 / DSM 11845 / VT8) (Marinobacter aquaeolei).